Reading from the N-terminus, the 325-residue chain is Tetraacyldisaccharide 4'-kinase (325 aa).

ATP is bound at residue 53 to 60; that stretch reads SVGGNGKT.

It belongs to the LpxK family.

The enzyme catalyses a lipid A disaccharide + ATP = a lipid IVA + ADP + H(+). The protein operates within glycolipid biosynthesis; lipid IV(A) biosynthesis; lipid IV(A) from (3R)-3-hydroxytetradecanoyl-[acyl-carrier-protein] and UDP-N-acetyl-alpha-D-glucosamine: step 6/6. Functionally, transfers the gamma-phosphate of ATP to the 4'-position of a tetraacyldisaccharide 1-phosphate intermediate (termed DS-1-P) to form tetraacyldisaccharide 1,4'-bis-phosphate (lipid IVA). This chain is Tetraacyldisaccharide 4'-kinase, found in Mannheimia succiniciproducens (strain KCTC 0769BP / MBEL55E).